Consider the following 761-residue polypeptide: Complement factor B (761 aa).

An N-terminal signal peptide occupies residues 1–25 (MGIGHNPRLCLVPLILGLLCGGVGM). Sushi domains lie at 35–100 (SPCS…ECKA), 101–160 (IRCP…ICDD), and 163–220 (TYCP…SCQD). Disulfide bonds link cysteine 37–cysteine 76, cysteine 62–cysteine 98, cysteine 103–cysteine 145, cysteine 131–cysteine 158, cysteine 165–cysteine 205, and cysteine 191–cysteine 218. Asparagine 122 and asparagine 142 each carry an N-linked (GlcNAc...) asparagine glycan. In terms of domain architecture, VWFA spans 270–469 (NIYLVLDGSD…NLEDVFVQML (200 aa)). The Mg(2+) site is built by serine 278 and serine 280. N-linked (GlcNAc...) asparagine glycosylation is present at asparagine 285. A Mg(2+)-binding site is contributed by threonine 353. Asparagine 378 is a glycosylation site (N-linked (GlcNAc...) asparagine). A Peptidase S1 domain is found at 477-754 (LCGMVWEHKD…VLPWLKEKLQ (278 aa)). Intrachain disulfides connect cysteine 478–cysteine 596, cysteine 511–cysteine 527, cysteine 599–cysteine 615, cysteine 656–cysteine 682, and cysteine 695–cysteine 725. Catalysis depends on charge relay system residues histidine 526 and aspartate 576. Serine 699 serves as the catalytic Charge relay system.

The protein belongs to the peptidase S1 family. Monomer. Interacts with complement C3b; this interaction is dependent on the presence of Mg(2+). As to quaternary structure, catalytic component of the C3 convertase of the alternative complement pathway, also named C3bBb, composed of complement factor B Bb and complement C3b. Catalytic component of the C5 convertase of the alternative complement pathway, also named C3bBb3b, composed of complement factor B Bb and additional molecules of complement C3b. Interacts to CFP; this interaction contributes to the stabilization of the active C3-convertase enzyme complex. It depends on Mg(2+) as a cofactor. Mn(2+) is required as a cofactor. Cleaved by CFD following activation of the alternative complement system, generating Ba and Bb chains. Cleavage and activation takes place when CFB is already associated with complement C3b.

The protein resides in the secreted. It is found in the cell surface. It carries out the reaction Cleavage of Arg-|-Ser bond in complement component C3 alpha-chain to yield C3a and C3b, and Arg-|-Xaa bond in complement component C5 alpha-chain to yield C5a and C5b.. Precursor of the catalytic component of the C3 and C5 convertase complexes of the alternative pathway of the complement system, a cascade of proteins that leads to phagocytosis and breakdown of pathogens and signaling that strengthens the adaptive immune system. The alternative complement pathway acts as an amplification loop that enhances other complement pathways (classical, lectin and GZMK) by promoting formation of additional C3 and C5 convertases. CFB is cleaved and activated by CFD to generate Ba and Bb chains; Bb chain constituting the catalytic component of the C3 and C5 convertases. Its function is as follows. Serine protease component of the complement C3 and C5 convertase complexes of the alternative complement pathway. Following cleavage and activation by factor D (CFD), forms the C3 convertase together with complement C3b. As part of the C3 convertase, cleaves and activates C3 into C3a anaphylatoxin and C3b opsonin, the next components of the complement pathways. When an additional complement C3b molecule binds to the C3 convertase, forms the C5 convertase, which cleaves and activates C5 into C5a anaphylatoxin and C5b component of the membrane attack complex. Functionally, involved in proliferation and differentiation of preactivated B-lymphocytes, rapid spreading of peripheral blood monocytes, stimulation of lymphocyte blastogenesis and lysis of erythrocytes. This is Complement factor B (CFB) from Bos taurus (Bovine).